Consider the following 279-residue polypeptide: Indole-3-glycerol phosphate synthase (279 aa).

The protein belongs to the TrpC family.

The enzyme catalyses 1-(2-carboxyphenylamino)-1-deoxy-D-ribulose 5-phosphate + H(+) = (1S,2R)-1-C-(indol-3-yl)glycerol 3-phosphate + CO2 + H2O. It functions in the pathway amino-acid biosynthesis; L-tryptophan biosynthesis; L-tryptophan from chorismate: step 4/5. The polypeptide is Indole-3-glycerol phosphate synthase (Ectopseudomonas mendocina (strain ymp) (Pseudomonas mendocina)).